Here is a 680-residue protein sequence, read N- to C-terminus: Coiled-coil domain-containing protein 138 (680 aa).

Position 63 is a phosphothreonine (Thr-63). Ser-64 carries the post-translational modification Phosphoserine. Residues 260 to 339 (KEQHGTEIEH…YEFMTVQRLK (80 aa)) are a coiled coil. The disordered stretch occupies residues 390 to 410 (EPEEPGVDGGKPPAKPSQRSD). At Ser-484 the chain carries Phosphoserine.

This is Coiled-coil domain-containing protein 138 (Ccdc138) from Mus musculus (Mouse).